Reading from the N-terminus, the 298-residue chain is Porphobilinogen deaminase (298 aa).

Cys-242 carries the S-(dipyrrolylmethanemethyl)cysteine modification.

It belongs to the HMBS family. In terms of assembly, monomer. Dipyrromethane serves as cofactor.

The catalysed reaction is 4 porphobilinogen + H2O = hydroxymethylbilane + 4 NH4(+). Its pathway is porphyrin-containing compound metabolism; protoporphyrin-IX biosynthesis; coproporphyrinogen-III from 5-aminolevulinate: step 2/4. Its function is as follows. Tetrapolymerization of the monopyrrole PBG into the hydroxymethylbilane pre-uroporphyrinogen in several discrete steps. This chain is Porphobilinogen deaminase, found in Fusobacterium nucleatum subsp. nucleatum (strain ATCC 25586 / DSM 15643 / BCRC 10681 / CIP 101130 / JCM 8532 / KCTC 2640 / LMG 13131 / VPI 4355).